The primary structure comprises 149 residues: MNLYLHPKLWPQLAGTKTLHVADAQRVRKITVHDGIWDAELPRAKRNHSYHLRYHGSSYSRCFLERYRCKTIGVFRRSNQPDCLETRSEKAKNRDGVVQEKSVRTLFSECVNQCDIRRRPTRFLRMFYHQKHFQLGLKGTETEKNERRL.

As to expression, expressed in heart, kidney, lung, and skeletal muscle, with lower levels in pancreas and liver.

In terms of biological role, may function as an early signal that helps mediate the activation of T-cells. The polypeptide is Early lymphoid activation gene protein (DIAPH2-AS1) (Homo sapiens (Human)).